Here is a 128-residue protein sequence, read N- to C-terminus: Photosystem II reaction center Psb28 protein (128 aa).

Positions 109–128 (SGLGYSQDSGEAPASDSSNG) are disordered. Residues 111–128 (LGYSQDSGEAPASDSSNG) show a composition bias toward polar residues.

Belongs to the Psb28 family. As to quaternary structure, part of the photosystem II complex.

It is found in the cellular thylakoid membrane. This is Photosystem II reaction center Psb28 protein from Synechococcus sp. (strain CC9311).